Here is a 479-residue protein sequence, read N- to C-terminus: Calcium-dependent mitochondrial ATP-magnesium/phosphate carrier protein 3 (479 aa).

Over 1-208 (MESSKPKNRN…ISKHVKRSRL (208 aa)) the chain is Mitochondrial intermembrane. EF-hand domains lie at 33–68 (EREIRIRSLFDFFDNSNLGFLDYAQIEKGLASLQIP), 69–104 (PEYKYARDLFRVCDANRDGRVDYQEFRRYIDAKELE), 105–135 (LYRIFQAIDVEHNGCILPEELWEALVKAGIE), and 136–171 (IDDEELARFVEHVDKDNNGTITFEEWRDFLLLYPHE). The Ca(2+) site is built by Asp82, Asn84, Asp86, Arg88, and Glu93. Ca(2+)-binding residues include Asp149, Asp151, Asn153, Thr155, and Glu160. Solcar repeat units lie at residues 203–286 (VKRS…LKPM), 294–381 (IGTS…LKDL), and 392–475 (PGPL…MKKN). The helical transmembrane segment at 209-226 (LLAGGLAGAVSRTATAPL) threads the bilayer. Residues 227–260 (DRLKVVLQVQRAHAGVLPTIKKIWREDKLMGFFR) are Mitochondrial matrix-facing. Residues 261–280 (GNGLNVMKVAPESAIKFCAY) form a helical membrane-spanning segment. The Mitochondrial intermembrane segment spans residues 281–303 (EMLKPMIGGEDGDIGTSGRLMAG). Residues 304-317 (GMAGALAQTAIYPM) traverse the membrane as a helical segment. At 318 to 355 (DLVKTRLQTCVSEGGKAPKLWKLTKDIWVREGPRAFYK) the chain is on the mitochondrial matrix side. Residues 356–375 (GLFPSLLGIVPYAGIDLAAY) form a helical membrane-spanning segment. Residues 376–397 (ETLKDLSRTYILQDTEPGPLIQ) lie on the Mitochondrial intermembrane side of the membrane. Residues 398-415 (LSCGMTSGALGASCVYPL) traverse the membrane as a helical segment. Residues 416-449 (QVVRTRMQADSSKTTMKQEFMNTMKGEGLRGFYR) are Mitochondrial matrix-facing. The chain crosses the membrane as a helical span at residues 450 to 469 (GLLPNLLKVVPAASITYIVY). Over 470–479 (EAMKKNMALD) the chain is Mitochondrial intermembrane.

Belongs to the mitochondrial carrier (TC 2.A.29) family. Expressed in flowers, leaves, stems, roots and seedlings, mostly in seedlings.

It localises to the mitochondrion inner membrane. With respect to regulation, counter-exchange transport activity is saturable and inhibited by pyridoxal-5'-phosphate, EDTA and EGTA. Activated by calcium Ca(2+) and manganese Mn(2+) ions, and slightly by iron Fe(2+) and zinc Zn(2+) ions. Repressed by copper ions Cu(2+) and slightly by magnesium Mg(2+) ions. Magnesium Mg(2+) ions promotes slightly ATP uptake, ATP-Mg(2+) being exchanged with ATP(4-). Calcium-dependent mitochondrial carrier protein that catalyzes the import of ATP co-transported with metal divalent cations across the mitochondrial inner membrane in exchange for phosphate (Pi). Can transport phosphate, AMP, ADP, ATP, adenosine 5'-phosphosulfate, sulfate and thiosulfate, and, to a lesser extent, other nucleotides. Binds calcium ions Ca(2+). Also mediates calcium uptake. The chain is Calcium-dependent mitochondrial ATP-magnesium/phosphate carrier protein 3 from Arabidopsis thaliana (Mouse-ear cress).